A 397-amino-acid chain; its full sequence is Elongation factor Tu (397 aa).

The tr-type G domain occupies 10–206 (KPHVNIGTIG…AVDTSIPQPE (197 aa)). The segment at 19–26 (GHIDHGKT) is G1. A GTP-binding site is contributed by 19–26 (GHIDHGKT). T26 is a binding site for Mg(2+). The interval 62–66 (GITIS) is G2. The segment at 83–86 (DCPG) is G3. GTP contacts are provided by residues 83–87 (DCPGH) and 138–141 (NKSD). A G4 region spans residues 138–141 (NKSD). Residues 176–178 (SAL) form a G5 region.

This sequence belongs to the TRAFAC class translation factor GTPase superfamily. Classic translation factor GTPase family. EF-Tu/EF-1A subfamily. As to quaternary structure, monomer.

It is found in the cytoplasm. It catalyses the reaction GTP + H2O = GDP + phosphate + H(+). Its function is as follows. GTP hydrolase that promotes the GTP-dependent binding of aminoacyl-tRNA to the A-site of ribosomes during protein biosynthesis. The polypeptide is Elongation factor Tu (Salinispora tropica (strain ATCC BAA-916 / DSM 44818 / JCM 13857 / NBRC 105044 / CNB-440)).